The primary structure comprises 380 residues: Cystathionine gamma-synthase (380 aa).

K195 is subject to N6-(pyridoxal phosphate)lysine.

This sequence belongs to the trans-sulfuration enzymes family. In terms of assembly, homotetramer. Pyridoxal 5'-phosphate is required as a cofactor.

The protein localises to the cytoplasm. The catalysed reaction is O-succinyl-L-homoserine + L-cysteine = L,L-cystathionine + succinate + H(+). The protein operates within amino-acid biosynthesis; L-methionine biosynthesis via de novo pathway; L-cystathionine from O-succinyl-L-homoserine: step 1/1. Its activity is regulated as follows. Four natural products, alpha-lapachone, 9-hydroxy-alpha-lapachone, Paulownin, and Yangambin, show strong inhibitory activities against CGS. All these four inhibitors prevent the binding of OSHS to CGS in a non-competitive fashion. These compounds are specific inhibitors against CGS from H.pylori relative to E.coli since they exhibit very low inhibition activities against CGS from E.coli. Catalyzes the formation of L-cystathionine from O-succinyl-L-homoserine (OSHS) and L-cysteine, via a gamma-replacement reaction. In the absence of thiol, catalyzes gamma-elimination to form 2-oxobutanoate, succinate and ammonia. This Helicobacter pylori (Campylobacter pylori) protein is Cystathionine gamma-synthase (metB).